We begin with the raw amino-acid sequence, 560 residues long: Phenol regulator MopR (560 aa).

Positions 106 and 134 each coordinate phenol. Positions 155, 178, 181, and 189 each coordinate Zn(2+). The region spanning 245–474 is the Sigma-54 factor interaction domain; the sequence is AVGESVAYRK…LENLLERATL (230 aa). Residues 273 to 280 and 336 to 345 each bind ATP; these read GETGVGKE and AHGGTIFLDE.

Homodimer.

Activity is triggered by phenol binding. In terms of biological role, involved in the regulation of the phenol degradation pathway. Activates phenol hydroxylase expression in the presence of phenol. The polypeptide is Phenol regulator MopR (Acinetobacter guillouiae (Acinetobacter genomosp. 11)).